The primary structure comprises 104 residues: MVEPVIEIEVVYAAVDRQVLRVISVAEGTTVRAALMASGIDAEFPELDLISCPLGIFGKVIADPDARRVQEGDRIEIYRPLLADPKEVRRLRAAKAAEAKARNQ.

Belongs to the UPF0125 (RnfH) family.

The sequence is that of Protein RnfH from Pseudomonas fluorescens (strain Pf0-1).